Here is a 221-residue protein sequence, read N- to C-terminus: Ribosomal RNA small subunit methyltransferase G (221 aa).

S-adenosyl-L-methionine-binding positions include G85, F90, 136–137 (AE), and R149.

It belongs to the methyltransferase superfamily. RNA methyltransferase RsmG family.

It is found in the cytoplasm. Specifically methylates the N7 position of a guanine in 16S rRNA. The chain is Ribosomal RNA small subunit methyltransferase G from Porphyromonas gingivalis (strain ATCC BAA-308 / W83).